We begin with the raw amino-acid sequence, 572 residues long: Cuticlin-6 (572 aa).

Residues 1–24 form the signal peptide; it reads MRPIPYDISLSITSFLSLILICSA. The Extracellular portion of the chain corresponds to 25–541; it reads NPIDNGLVDS…PLPYPLINTN (517 aa). Residues 47 to 216 form the VWFA domain; the sequence is EVILLLDASG…QLDRALADSL (170 aa). The N-linked (GlcNAc...) asparagine glycan is linked to N78. In terms of domain architecture, ZP spans 233–479; the sequence is ICGPDRIGVK…GGCEGITPPQ (247 aa). A helical transmembrane segment spans residues 542 to 562; that stretch reads LWIMGIITLTNIFVFILTVWF. Over 563–572 the chain is Cytoplasmic; it reads TFRKRRCKPA.

It localises to the cell membrane. Its function is as follows. Plays a role in alae formation in dauer larvae probably by regulating cuticle assembly. This chain is Cuticlin-6, found in Caenorhabditis elegans.